Reading from the N-terminus, the 801-residue chain is Potassium transporter 1 (801 aa).

Residues Met-1–Thr-20 form a disordered region. Over Met-1–His-57 the chain is Cytoplasmic. Residues Leu-58–Ser-80 form a helical membrane-spanning segment. Topologically, residues Thr-81–Gly-94 are extracellular. Residues Val-95 to Val-115 traverse the membrane as a helical segment. At Leu-116 to Lys-181 the chain is on the cytoplasmic side. A helical membrane pass occupies residues Met-182–Thr-202. Residues Pro-203–Pro-219 lie on the Extracellular side of the membrane. The chain crosses the membrane as a helical span at residues Asn-220–Val-240. Topologically, residues Gln-241–Lys-247 are cytoplasmic. The helical transmembrane segment at Val-248 to Leu-268 threads the bilayer. The Extracellular portion of the chain corresponds to Tyr-269–Gly-298. Residues Trp-299–Leu-319 traverse the membrane as a helical segment. Residues Gly-320–Gln-328 are Cytoplasmic-facing. The chain crosses the membrane as a helical span at residues Ile-329–Tyr-349. At Leu-350–Phe-375 the chain is on the extracellular side. A helical transmembrane segment spans residues Gly-376–Leu-398. Residues Ser-399–Gln-429 are Cytoplasmic-facing. The helical transmembrane segment at Val-430–Phe-450 threads the bilayer. At Arg-451–Gly-461 the chain is on the extracellular side. Residues Ile-462 to Ile-482 form a helical membrane-spanning segment. Residues Trp-483–Leu-487 lie on the Cytoplasmic side of the membrane. A helical transmembrane segment spans residues Val-488–Ile-508. Residues Leu-509–Lys-511 are Extracellular-facing. The chain crosses the membrane as a helical span at residues Phe-512–Thr-532. The Cytoplasmic portion of the chain corresponds to Trp-533–Ile-801. The interval Asp-679 to Asp-728 is disordered. Over residues Ala-704–Leu-717 the composition is skewed to polar residues.

This sequence belongs to the HAK/KUP transporter (TC 2.A.72.3) family. In terms of tissue distribution, expressed almost exclusively in roots.

The protein resides in the cell membrane. In terms of biological role, high-affinity potassium transporter. Also transports rubidium, with the same affinity and cesium, with a lower affinity. The polypeptide is Potassium transporter 1 (HAK1) (Oryza sativa subsp. japonica (Rice)).